The sequence spans 183 residues: Thioredoxin-like protein CITRX, chloroplastic (183 aa).

Residues 1–81 constitute a chloroplast transit peptide; it reads MALVQSRTFP…REDYLVKKLS (81 aa). The region spanning 82 to 183 is the Thioredoxin domain; it reads AQELQELVKG…MMHDIIDNEM (102 aa). Active-site nucleophile residues include Cys106 and Cys109. Cysteines 106 and 109 form a disulfide.

It belongs to the thioredoxin family. Plant CITRX-type subfamily. Interacts with FLN1 and FLN2. Interacts with MRL7.

The protein resides in the plastid. It localises to the chloroplast. Thiol-disulfide oxidoreductase that plays a role in proper chloroplast development, most likely through regulating plastid-encoded polymerase (PEP) dependent chloroplast transcription. Acts as a component of the transcriptionally active plastid chromosome that is required for plastid gene expression. The chain is Thioredoxin-like protein CITRX, chloroplastic from Arabidopsis thaliana (Mouse-ear cress).